The following is a 181-amino-acid chain: Acireductone dioxygenase (181 aa).

Residues H97, H99, E103, and H141 each coordinate Fe(2+). Ni(2+) contacts are provided by H97, H99, E103, and H141.

It belongs to the acireductone dioxygenase (ARD) family. Monomer. Fe(2+) is required as a cofactor. It depends on Ni(2+) as a cofactor.

It catalyses the reaction 1,2-dihydroxy-5-(methylsulfanyl)pent-1-en-3-one + O2 = 3-(methylsulfanyl)propanoate + CO + formate + 2 H(+). It carries out the reaction 1,2-dihydroxy-5-(methylsulfanyl)pent-1-en-3-one + O2 = 4-methylsulfanyl-2-oxobutanoate + formate + 2 H(+). It functions in the pathway amino-acid biosynthesis; L-methionine biosynthesis via salvage pathway; L-methionine from S-methyl-5-thio-alpha-D-ribose 1-phosphate: step 5/6. Its function is as follows. Catalyzes 2 different reactions between oxygen and the acireductone 1,2-dihydroxy-3-keto-5-methylthiopentene (DHK-MTPene) depending upon the metal bound in the active site. Fe-containing acireductone dioxygenase (Fe-ARD) produces formate and 2-keto-4-methylthiobutyrate (KMTB), the alpha-ketoacid precursor of methionine in the methionine recycle pathway. Ni-containing acireductone dioxygenase (Ni-ARD) produces methylthiopropionate, carbon monoxide and formate, and does not lie on the methionine recycle pathway. The sequence is that of Acireductone dioxygenase from Pseudomonas paraeruginosa (strain DSM 24068 / PA7) (Pseudomonas aeruginosa (strain PA7)).